The chain runs to 414 residues: Glucose-1-phosphate adenylyltransferase (414 aa).

Residues G164, 181 to 182 (EK), and S199 contribute to the alpha-D-glucose 1-phosphate site.

It belongs to the bacterial/plant glucose-1-phosphate adenylyltransferase family. Homotetramer.

The enzyme catalyses alpha-D-glucose 1-phosphate + ATP + H(+) = ADP-alpha-D-glucose + diphosphate. The protein operates within glycan biosynthesis; glycogen biosynthesis. Functionally, involved in the biosynthesis of ADP-glucose, a building block required for the elongation reactions to produce glycogen. Catalyzes the reaction between ATP and alpha-D-glucose 1-phosphate (G1P) to produce pyrophosphate and ADP-Glc. This chain is Glucose-1-phosphate adenylyltransferase, found in Kocuria rhizophila (strain ATCC 9341 / DSM 348 / NBRC 103217 / DC2201).